The chain runs to 206 residues: 3-demethoxyubiquinol 3-hydroxylase (206 aa).

Residues Glu-55, Glu-85, His-88, Glu-137, Glu-169, and His-172 each coordinate Fe cation.

Belongs to the COQ7 family. Requires Fe cation as cofactor.

The protein localises to the cell membrane. The catalysed reaction is a 5-methoxy-2-methyl-3-(all-trans-polyprenyl)benzene-1,4-diol + AH2 + O2 = a 3-demethylubiquinol + A + H2O. The protein operates within cofactor biosynthesis; ubiquinone biosynthesis. Catalyzes the hydroxylation of 2-nonaprenyl-3-methyl-6-methoxy-1,4-benzoquinol during ubiquinone biosynthesis. This is 3-demethoxyubiquinol 3-hydroxylase from Aromatoleum aromaticum (strain DSM 19018 / LMG 30748 / EbN1) (Azoarcus sp. (strain EbN1)).